Consider the following 327-residue polypeptide: Chain length determinant protein (327 aa).

Topologically, residues 1–31 (MTVDSNTSSGRGNDPEQIDLIELLLQLWRGK) are cytoplasmic. Residues 32–52 (MTIIVAVIIAILLAVGYLMIA) form a helical membrane-spanning segment. Topologically, residues 53–294 (KEKWTSTAII…LPVRRDSPKT (242 aa)) are periplasmic. A helical transmembrane segment spans residues 295–315 (AITLVLAVLLGGMIGAGIVLG). Residues 316–327 (RNALRSYKPKAL) are Cytoplasmic-facing.

Belongs to the WzzB/Cld/Rol family.

It is found in the cell inner membrane. It functions in the pathway bacterial outer membrane biogenesis; lipopolysaccharide biosynthesis. Functionally, confers a modal distribution of chain length on the O-antigen component of lipopolysaccharide (LPS). Gives rise to a reduced number of short chain molecules and increases in numbers of longer molecules, with a modal value of 20. This chain is Chain length determinant protein (wzzB), found in Salmonella typhimurium (strain LT2 / SGSC1412 / ATCC 700720).